Here is a 427-residue protein sequence, read N- to C-terminus: Cysteate synthase (427 aa).

Lys-104 is subject to N6-(pyridoxal phosphate)lysine. 2 residues coordinate pyridoxal 5'-phosphate: Asn-130 and Thr-382.

This sequence belongs to the threonine synthase family. Cysteate synthase subfamily. In terms of assembly, homotrimer. The cofactor is pyridoxal 5'-phosphate.

It catalyses the reaction O-phospho-L-serine + sulfite + H(+) = L-cysteate + phosphate. Its pathway is cofactor biosynthesis; coenzyme M biosynthesis. Functionally, specifically catalyzes the beta-elimination of phosphate from L-phosphoserine and the beta-addition of sulfite to the dehydroalanine intermediate to produce L-cysteate. This Methanocella paludicola (strain DSM 17711 / JCM 13418 / NBRC 101707 / SANAE) protein is Cysteate synthase.